Here is a 231-residue protein sequence, read N- to C-terminus: 7-cyano-7-deazaguanine synthase (231 aa).

ATP is bound at residue 7 to 17 (LSSGLDSVAAL). Cys-195, Cys-203, Cys-206, and Cys-209 together coordinate Zn(2+).

Belongs to the QueC family. Requires Zn(2+) as cofactor.

It catalyses the reaction 7-carboxy-7-deazaguanine + NH4(+) + ATP = 7-cyano-7-deazaguanine + ADP + phosphate + H2O + H(+). Its pathway is purine metabolism; 7-cyano-7-deazaguanine biosynthesis. Its function is as follows. Catalyzes the ATP-dependent conversion of 7-carboxy-7-deazaguanine (CDG) to 7-cyano-7-deazaguanine (preQ(0)). In Methanosarcina mazei (strain ATCC BAA-159 / DSM 3647 / Goe1 / Go1 / JCM 11833 / OCM 88) (Methanosarcina frisia), this protein is 7-cyano-7-deazaguanine synthase.